A 153-amino-acid polypeptide reads, in one-letter code: Superoxide dismutase [Cu-Zn] (153 aa).

H46, H48, and H63 together coordinate Cu cation. An intrachain disulfide couples C57 to C146. Residues 61-80 (GPHFNPFGKEHGAPEDENRH) are disordered. 4 residues coordinate Zn(2+): H63, H71, H80, and D83. The span at 68 to 80 (GKEHGAPEDENRH) shows a compositional bias: basic and acidic residues. Residue H120 coordinates Cu cation. Residues 124-136 (DDLGRSEHPESKK) show a composition bias toward basic and acidic residues. The segment at 124-143 (DDLGRSEHPESKKTGNAGAR) is disordered. R143 is a substrate binding site.

The protein belongs to the Cu-Zn superoxide dismutase family. In terms of assembly, homodimer. The cofactor is Cu cation. It depends on Zn(2+) as a cofactor.

Its subcellular location is the cytoplasm. The enzyme catalyses 2 superoxide + 2 H(+) = H2O2 + O2. In terms of biological role, destroys radicals which are normally produced within the cells and which are toxic to biological systems. This is Superoxide dismutase [Cu-Zn] (sodC) from Aspergillus flavus.